Consider the following 879-residue polypeptide: Phosphoinositide 3-kinase regulatory subunit 5 (879 aa).

The tract at residues 23–100 (SGSTDISSNW…APYIPETSDL (78 aa)) is heterodimerization. 2 disordered regions span residues 314–345 (SLED…PKQD) and 570–590 (SSST…PSPS). The segment covering 315 to 336 (LEDDVTEEDEEVDFEEVDDKDE) has biased composition (acidic residues). Over residues 570–589 (SSSTNAPMTNAESPLKSPSP) the composition is skewed to polar residues. Residues 651 to 751 (PILADMVLYY…WSNGEKVCTS (101 aa)) are interaction with beta-gamma G protein dimers.

As to quaternary structure, heterodimer. Interacts with a catalytic subunit and with beta-gamma G protein dimers.

The protein resides in the nucleus. It is found in the cytoplasm. It localises to the cell membrane. Its activity is regulated as follows. Greatly activated by G gamma proteins. Functionally, regulatory subunit of the PI3K gamma complex. Required for recruitment of the catalytic subunit to the plasma membrane via interaction with beta-gamma G protein dimers. Required for G protein-mediated activation of PIK3CG. In Xenopus laevis (African clawed frog), this protein is Phosphoinositide 3-kinase regulatory subunit 5 (pik3r5).